We begin with the raw amino-acid sequence, 417 residues long: Peptidyl-Asp metalloendopeptidase (417 aa).

The signal sequence occupies residues 1–25 (MLSRSIGKAAGGLVLGLSVAAAAHA). His327 is a binding site for Zn(2+). Residue Glu328 is part of the active site. Zn(2+) contacts are provided by His331 and His337.

This sequence belongs to the peptidase M72 family. It depends on Zn(2+) as a cofactor.

The catalysed reaction is Cleavage of Xaa-|-Asp, Xaa-|-Glu and Xaa-|-cysteic acid bonds.. Functionally, metalloprotease, specifically cleaves on the N-terminal side of aspartyl, glutamyl and cysteic acid residues. The polypeptide is Peptidyl-Asp metalloendopeptidase (Stenotrophomonas maltophilia (strain K279a)).